The sequence spans 520 residues: Cell adhesion molecule CEACAM2 (520 aa).

An N-terminal signal peptide occupies residues 1 to 34 (MELASAHLHKGQVPWFGLLLTASLLASWSPPTTA). Residues 35–141 (QVTVMAFPLH…RVLTGQFHVH (107 aa)) form the Ig-like V-type domain. Residues 35–422 (QVTVMAFPLH…IFDSTYDISD (388 aa)) lie on the Extracellular side of the membrane. Residues Asn-87, Asn-104, Asn-148, Asn-152, Asn-175, Asn-199, Asn-206, Asn-210, Asn-226, Asn-258, Asn-290, Asn-294, Asn-304, Asn-317, Asn-333, and Asn-361 are each glycosylated (N-linked (GlcNAc...) asparagine). 3 Ig-like C2-type domains span residues 145-234 (LKSN…FSLN), 239-319 (PDTP…KNIT), and 327-411 (PSLQ…IKLE). Residues Cys-167 and Cys-217 are joined by a disulfide bond. A disulfide bridge links Cys-261 with Cys-301. Cysteines 346 and 394 form a disulfide. The chain crosses the membrane as a helical span at residues 423-443 (VPIAVIITGAVAGVILIAGLA). At 444–520 (YRLCSRKSRW…ETVYSEVKKK (77 aa)) the chain is on the cytoplasmic side. Positions 457–520 (QRDLTEHKPS…ETVYSEVKKK (64 aa)) are disordered. Over residues 466–480 (SASNHNLAPSDNSPN) the composition is skewed to polar residues. Residue Tyr-487 is modified to Phosphotyrosine. Positions 490–513 (LNFNSQQPNRPTSAPSSPRATETV) are enriched in polar residues. Residue Ser-502 is modified to Phosphoserine. Tyr-514 is modified (phosphotyrosine).

Belongs to the immunoglobulin superfamily. CEA family. In terms of assembly, interacts weakly with MHV spike protein in tissue culture. In terms of tissue distribution, isoform 2 is detected in elongating spermatids within the seminiferous epithelium (at protein level). Expressed in kidney, colon, uterus, gut mononuclear cells, crypt epithelia of intestinal tissues, and to a lesser extent, in spleen. Expressed in brain including VMH, globus pallidus, ventral pallidum, striatum, olfactory bulb and hippocampus. Also detected in rectal carcinoma cell line CMT93. Isoform 2 and isoform 3 are expressed in testis. Isoform 2 is detected in seminiferous tubule, not detected in epididymal spermatozoa. Also not observed on spermatogonia, spermatocytes, round spermatids or somatic Sertoli cells. During stages I-VII of spermatogenesis, detected on the elongating spermatids. At spermiation (stage VIII) and subsequent stages IX-XII, levels are drastically reduced or absent in the seminiferous tubules. Sometimes weakly detected in the apical region of stage-VIII seminiferous epithelium. Isoform 2 level is very low in stomach, kidney, intestine, liver and spleen.

The protein resides in the cell membrane. Functionally, controls energy balance and peripheral insulin action. Involved in the regulation of feeding behavior particularly in the ventromedial nucleus of hypothalamus (VMH) regulation of food intake. Has a role in the regulation of metabolic rate and insulin sensitivity or resistance via effects on brown adipogenesis, sympathetic nervous outflow to brown adipose tissue, spontaneous activity and energy expenditure in skeletal muscle. In case of murine coronavirus (MHV) infection, does probably not serve as functional receptor for the virus. Isoform 2 may be an adhesion molecule contributing to cell to cell adhesion between elongating spermatids and Sertoli cells within the seminiferous epithelium. This is Cell adhesion molecule CEACAM2 from Mus musculus (Mouse).